The sequence spans 329 residues: tRNA pseudouridine synthase B (329 aa).

His43 provides a ligand contact to substrate. Asp48 serves as the catalytic Nucleophile. Substrate contacts are provided by Tyr76, Tyr179, and Leu200.

This sequence belongs to the pseudouridine synthase TruB family. Type 1 subfamily.

It catalyses the reaction uridine(55) in tRNA = pseudouridine(55) in tRNA. Its function is as follows. Responsible for synthesis of pseudouridine from uracil-55 in the psi GC loop of transfer RNAs. The polypeptide is tRNA pseudouridine synthase B (Yersinia enterocolitica serotype O:8 / biotype 1B (strain NCTC 13174 / 8081)).